A 1322-amino-acid polypeptide reads, in one-letter code: Transcription elongation factor SPT6-like (1322 aa).

The segment covering 1-17 has biased composition (basic and acidic residues); sequence MNRIDEEPQIHEDPVEN. Disordered stretches follow at residues 1 to 65 and 90 to 113; these read MNRI…KKDE and KRLK…DLSH. The span at 18 to 33 shows a compositional bias: acidic residues; that stretch reads REEDDEDEDDQYEFDD. Over residues 48-65 the composition is skewed to basic and acidic residues; that stretch reads EQRHCSEKKSRSRRKKDE. A compositionally biased stretch (acidic residues) spans 97–110; that stretch reads EEEDKINNDDDDDD. An S1 motif domain is found at 1017-1088; the sequence is GRIVQATVKK…QRYHVLLVCK (72 aa).

This sequence belongs to the SPT6 family.

It is found in the nucleus. Transcription elongation factor that enhances the transcription elongation by RNA polymerase II (RNAPII). In Arabidopsis thaliana (Mouse-ear cress), this protein is Transcription elongation factor SPT6-like.